The sequence spans 314 residues: Olfactory receptor 5P6 (314 aa).

At 1 to 28 (MAFQEDGNHTAVTEFVLFGLTDDPVLRV) the chain is on the extracellular side. A glycan (N-linked (GlcNAc...) asparagine) is linked at asparagine 8. The helical transmembrane segment at 29–49 (ILFIIFLCIYLVTVSGNLSTI) threads the bilayer. Topologically, residues 50–57 (LLIRVSSQ) are cytoplasmic. Residues 58 to 78 (LHHPMYFFLSHLAFADIGYSS) form a helical membrane-spanning segment. Over 79-102 (SVTPNMLVNFLVERHTISYIGCAI) the chain is Extracellular. Cysteine 100 and cysteine 192 form a disulfide bridge. Residues 103-123 (QLGSVVFFGSSECFILAAMAY) traverse the membrane as a helical segment. Residues 124 to 136 (DRFMAICNPLLYS) are Cytoplasmic-facing. A helical membrane pass occupies residues 137-157 (TKMSTQVCVQLLLIAYIGGFL). Residues 158-199 (NTWSFTICFYSLVFCGPNGVNHFFCDFAPLIELSCSDVSVPA) lie on the Extracellular side of the membrane. A helical membrane pass occupies residues 200–220 (TVPSFTAGSIIVVTVIVIAIS). Residues 221 to 240 (YIYILITILKMHSTEGRQKA) lie on the Cytoplasmic side of the membrane. The helical transmembrane segment at 241-261 (FSTCTSHLTAVTLFYGTITFI) threads the bilayer. The Extracellular segment spans residues 262-274 (YVMPKSSFSTDQN). The chain crosses the membrane as a helical span at residues 275–295 (KVVSVFYMVVIPMLNPLIYSL). Topologically, residues 296–314 (RNNEIKGALKRQIGRKIFS) are cytoplasmic.

The protein belongs to the G-protein coupled receptor 1 family.

The protein localises to the cell membrane. Potential odorant receptor. This Mus musculus (Mouse) protein is Olfactory receptor 5P6.